The primary structure comprises 338 residues: Glycerol-3-phosphate dehydrogenase [NAD(P)+] (338 aa).

Residues Ser13, Trp14, and Lys108 each contribute to the NADPH site. Sn-glycerol 3-phosphate-binding residues include Lys108, Gly139, and Ser141. NADPH is bound at residue Ala143. Sn-glycerol 3-phosphate contacts are provided by Lys194, Asp247, Ser257, Arg258, and Asn259. Catalysis depends on Lys194, which acts as the Proton acceptor. Residue Arg258 coordinates NADPH. 2 residues coordinate NADPH: Val282 and Glu284.

It belongs to the NAD-dependent glycerol-3-phosphate dehydrogenase family.

The protein localises to the cytoplasm. It carries out the reaction sn-glycerol 3-phosphate + NAD(+) = dihydroxyacetone phosphate + NADH + H(+). The catalysed reaction is sn-glycerol 3-phosphate + NADP(+) = dihydroxyacetone phosphate + NADPH + H(+). Its pathway is membrane lipid metabolism; glycerophospholipid metabolism. Its function is as follows. Catalyzes the reduction of the glycolytic intermediate dihydroxyacetone phosphate (DHAP) to sn-glycerol 3-phosphate (G3P), the key precursor for phospholipid synthesis. The protein is Glycerol-3-phosphate dehydrogenase [NAD(P)+] of Streptococcus pneumoniae (strain P1031).